Consider the following 654-residue polypeptide: DNA ligase (654 aa).

NAD(+)-binding positions include 37-41, 86-87, and Glu113; these read DEEYD and SM. The active-site N6-AMP-lysine intermediate is the Lys115. The NAD(+) site is built by Arg136, Glu170, and Lys308. The Zn(2+) site is built by Cys402, Cys405, Cys418, and Cys423. A BRCT domain is found at 576 to 654; that stretch reads ITQNAFSGKS…GEFERLKLEI (79 aa).

The protein belongs to the NAD-dependent DNA ligase family. LigA subfamily. Requires Mg(2+) as cofactor. It depends on Mn(2+) as a cofactor.

The catalysed reaction is NAD(+) + (deoxyribonucleotide)n-3'-hydroxyl + 5'-phospho-(deoxyribonucleotide)m = (deoxyribonucleotide)n+m + AMP + beta-nicotinamide D-nucleotide.. DNA ligase that catalyzes the formation of phosphodiester linkages between 5'-phosphoryl and 3'-hydroxyl groups in double-stranded DNA using NAD as a coenzyme and as the energy source for the reaction. It is essential for DNA replication and repair of damaged DNA. The chain is DNA ligase from Campylobacter curvus (strain 525.92).